We begin with the raw amino-acid sequence, 1634 residues long: DNA polymerase (1634 aa).

2 DOD-type homing endonuclease domains span residues 552–693 and 1163–1295; these read LIGI…RLGI and FLGF…LVGI.

It belongs to the DNA polymerase type-B family. In terms of processing, this protein undergoes a protein self splicing that involves a post-translational excision of the intervening region (intein) followed by peptide ligation.

It catalyses the reaction DNA(n) + a 2'-deoxyribonucleoside 5'-triphosphate = DNA(n+1) + diphosphate. The chain is DNA polymerase (pol) from Methanocaldococcus jannaschii (strain ATCC 43067 / DSM 2661 / JAL-1 / JCM 10045 / NBRC 100440) (Methanococcus jannaschii).